An 889-amino-acid chain; its full sequence is Low-affinity potassium transport protein (889 aa).

The Cytoplasmic portion of the chain corresponds to 1–51; the sequence is MPTAKRTSSRASLALPFQLRLVHKKSWGHRLRDFISGFLKSCRPIAKYVFP. A helical membrane pass occupies residues 52–73; that stretch reads NFIVVHYIYLITLSIIGSILLY. Over 74 to 80 the chain is Extracellular; it reads PCKNTAF. The helical transmembrane segment at 81–101 threads the bilayer; it reads IDVLFLAAGASTQGGLATKST. The Cytoplasmic portion of the chain corresponds to 102-109; the sequence is NDFNLYQQ. A helical membrane pass occupies residues 110 to 130; it reads IVVYVITLLSTPILIHGFLAF. The Extracellular segment spans residues 131 to 464; sequence VRLYWFERYF…EYRALRLLCC (334 aa). The disordered stretch occupies residues 189–244; the sequence is REDPRQSASDVPMDSPDTSALSSISPLNVSSSKEESSDTQSSPPNFSSKRQPSDVD. The segment covering 207–219 has biased composition (low complexity); the sequence is SALSSISPLNVSS. Residues Asn-216, Asn-233, and Asn-265 are each glycosylated (N-linked (GlcNAc...) asparagine). A helical transmembrane segment spans residues 465–487; it reads ILMVYYIGFNILAFVTIVPWACT. Residues 488 to 499 are Cytoplasmic-facing; the sequence is RHHYSEIIRRNG. The chain crosses the membrane as a helical span at residues 500 to 521; that stretch reads VSPTWWGFFTAMSAFSNLGLSL. Topologically, residues 522-524 are extracellular; sequence TAD. Residues 525 to 545 traverse the membrane as a helical segment; the sequence is SMVSFDTAPYPLIFMMFFIII. The Cytoplasmic portion of the chain corresponds to 546-548; it reads GNT. A helical membrane pass occupies residues 549-569; the sequence is GFPIMLRFIIWIMFKTSRDLS. Over 570 to 584 the chain is Extracellular; sequence QFKESLGFLLDHPRR. The chain crosses the membrane as a helical span at residues 585–605; the sequence is CFTLLFPSGPTWWLFTTLVVL. At 606–609 the chain is on the cytoplasmic side; sequence NATD. A helical membrane pass occupies residues 610–630; sequence WILFIILDFNSAVVRQVAKGY. Residues 631–657 lie on the Extracellular side of the membrane; that stretch reads RALMGLFQSVCTRTAGFNVVDLSKLHP. Residues 658–678 traverse the membrane as a helical segment; it reads SIQVSYMLMMYVSVLPLAISI. The Cytoplasmic segment spans residues 679–743; the sequence is RRTNVYEEQS…KSFVGAHLRR (65 aa). A disordered region spans residues 705–733; it reads DDIKETDHDGESEERDTVSTKSKPKKQSP. Residues 744–764 form a helical membrane-spanning segment; the sequence is QLSFDLWYLFLGLFIICICEG. Residues 765–776 are Extracellular-facing; it reads RKIEDVNKPDFN. The helical transmembrane segment at 777-797 threads the bilayer; it reads VFAILFEVVSAYGTVGLSLGY. The Cytoplasmic segment spans residues 798–889; sequence PNTNTSLSAQ…KIATKFWGKH (92 aa).

It belongs to the TrkH potassium transport family.

It localises to the membrane. This protein is required for low-affinity potassium transport. This Saccharomyces cerevisiae (strain ATCC 204508 / S288c) (Baker's yeast) protein is Low-affinity potassium transport protein (TRK2).